The chain runs to 143 residues: Large ribosomal subunit protein uL11 (143 aa).

The protein belongs to the universal ribosomal protein uL11 family. As to quaternary structure, part of the ribosomal stalk of the 50S ribosomal subunit. Interacts with L10 and the large rRNA to form the base of the stalk. L10 forms an elongated spine to which L12 dimers bind in a sequential fashion forming a multimeric L10(L12)X complex. One or more lysine residues are methylated.

Forms part of the ribosomal stalk which helps the ribosome interact with GTP-bound translation factors. The sequence is that of Large ribosomal subunit protein uL11 from Bordetella parapertussis (strain 12822 / ATCC BAA-587 / NCTC 13253).